Consider the following 200-residue polypeptide: Large ribosomal subunit protein uL4 (200 aa).

The segment at 44–71 (AQKTRAEVSGGGKKPWRQKGTGRARAGS) is disordered.

This sequence belongs to the universal ribosomal protein uL4 family. In terms of assembly, part of the 50S ribosomal subunit.

Functionally, one of the primary rRNA binding proteins, this protein initially binds near the 5'-end of the 23S rRNA. It is important during the early stages of 50S assembly. It makes multiple contacts with different domains of the 23S rRNA in the assembled 50S subunit and ribosome. Its function is as follows. Forms part of the polypeptide exit tunnel. In Psychrobacter sp. (strain PRwf-1), this protein is Large ribosomal subunit protein uL4.